We begin with the raw amino-acid sequence, 127 residues long: Large ribosomal subunit protein uL22 (127 aa).

Positions 106–117 (GAPEGVPVGGAV) are enriched in low complexity. The interval 106 to 127 (GAPEGVPVGGAVDTPGDEEEEE) is disordered.

The protein belongs to the universal ribosomal protein uL22 family. In terms of assembly, part of the 50S ribosomal subunit.

Functionally, this protein binds specifically to 23S rRNA; its binding is stimulated by other ribosomal proteins, e.g. L4, L17, and L20. It is important during the early stages of 50S assembly. It makes multiple contacts with different domains of the 23S rRNA in the assembled 50S subunit and ribosome. The globular domain of the protein is located near the polypeptide exit tunnel on the outside of the subunit, while an extended beta-hairpin is found that lines the wall of the exit tunnel in the center of the 70S ribosome. The sequence is that of Large ribosomal subunit protein uL22 from Rubrobacter xylanophilus (strain DSM 9941 / JCM 11954 / NBRC 16129 / PRD-1).